We begin with the raw amino-acid sequence, 310 residues long: tRNA pseudouridine synthase B (310 aa).

The active-site Nucleophile is aspartate 38.

The protein belongs to the pseudouridine synthase TruB family. Type 1 subfamily.

It carries out the reaction uridine(55) in tRNA = pseudouridine(55) in tRNA. In terms of biological role, responsible for synthesis of pseudouridine from uracil-55 in the psi GC loop of transfer RNAs. The chain is tRNA pseudouridine synthase B from Geotalea uraniireducens (strain Rf4) (Geobacter uraniireducens).